The chain runs to 110 residues: MNLQEILKEIDFKKGSDLIPTIIQDFYSGEVLMLAYMNKESLEKTIETNTTWFWSRSREELWNKGATSGHFQYVKSIHIDCDGDTLLIKVEQLGPACHTGHRSCFYTPLI.

Asp80 is a binding site for Mg(2+). Cys81 is a binding site for Zn(2+). Mg(2+) is bound by residues Asp82 and Asp84. Cys97 and Cys104 together coordinate Zn(2+).

This sequence belongs to the PRA-CH family. As to quaternary structure, homodimer. It depends on Mg(2+) as a cofactor. Requires Zn(2+) as cofactor.

Its subcellular location is the cytoplasm. The enzyme catalyses 1-(5-phospho-beta-D-ribosyl)-5'-AMP + H2O = 1-(5-phospho-beta-D-ribosyl)-5-[(5-phospho-beta-D-ribosylamino)methylideneamino]imidazole-4-carboxamide. The protein operates within amino-acid biosynthesis; L-histidine biosynthesis; L-histidine from 5-phospho-alpha-D-ribose 1-diphosphate: step 3/9. In terms of biological role, catalyzes the hydrolysis of the adenine ring of phosphoribosyl-AMP. The polypeptide is Phosphoribosyl-AMP cyclohydrolase (Clostridium botulinum (strain Kyoto / Type A2)).